The following is a 444-amino-acid chain: Transcription activator AKTR-3 (444 aa).

The segment at residues 16 to 43 (CDFCTQSKLRCNKNKPSCRRCTIQQQPC) is a DNA-binding region (zn(2)-C6 fungal-type). Positions 49-89 (RRTGRPPKHPRTANDCQEANGQHGEQDPVTSTPGGSCQQQS) are disordered. Over residues 50–59 (RTGRPPKHPR) the composition is skewed to basic residues. The segment covering 76-89 (PVTSTPGGSCQQQS) has biased composition (polar residues).

The protein resides in the nucleus. Its function is as follows. Transcription factor that regulates the expression of the gene clusters that mediate the biosynthesis of the host-selective toxins (HSTs) AK-toxins responsible for Japanese pear black spot disease by the Japanese pear pathotype. AK-toxins are esters of 9,10-epoxy 8-hydroxy 9-methyldecatrienoic acid (EDA). On cellular level, AK-toxins affect plasma membrane of susceptible cells and cause a sudden increase in loss of K(+) after a few minutes of toxin treatment. This is Transcription activator AKTR-3 from Alternaria alternata (Alternaria rot fungus).